Consider the following 84-residue polypeptide: Large ribosomal subunit protein bL27 (84 aa).

Residues 1–25 (MAHKKGQGSTQNNRDSAGRRLGVKK) are disordered.

This sequence belongs to the bacterial ribosomal protein bL27 family.

The sequence is that of Large ribosomal subunit protein bL27 from Sulfurovum sp. (strain NBC37-1).